The primary structure comprises 140 residues: Protein S40-1 (140 aa).

The interval 16 to 58 is disordered; sequence YFPIRRREDGNEKENNRPVDFRENSERVWNKSSRRSKTTPLPS. Over residues 20 to 44 the composition is skewed to basic and acidic residues; sequence RRREDGNEKENNRPVDFRENSERVW.

This sequence belongs to the senescence regulator S40 family.

It is found in the cytoplasm. This chain is Protein S40-1, found in Arabidopsis thaliana (Mouse-ear cress).